A 227-amino-acid chain; its full sequence is Lysosomal-associated transmembrane protein 4B (227 aa).

The next 4 membrane-spanning stretches (helical) occupy residues 26–46 (ILLG…LLSA), 72–92 (MCIA…ATYG), 100–120 (WIIP…LVAI), and 153–173 (CLVL…GYLI). The segment at 205–222 (PPYDDATAVTGTAKEPPP) is required for NEDD4 interaction.

It belongs to the LAPTM4/LAPTM5 transporter family. Homooligomer; upon reaching the lysosomes. Interacts with MCOLN1. Interacts with NEDD4; may play a role in the lysosomal sorting of LAPTM4B; enhances HGS association with NEDD4; mediates inhibition of EGFR degradation. Interacts with PIP5K1C; promotes SNX5 association with LAPTM4B; kinase activity of PIP5K1C is required; interaction is regulated by phosphatidylinositol 4,5-bisphosphate generated by PIP5K1C. Interacts with HGS; promotes HGS ubiquitination. Interacts with SNX5. Interacts with SLC3A2 and SLC7A5; recruits SLC3A2 and SLC7A5 to lysosomes to promote leucine uptake into these organelles and is required for mTORC1 activation. Interacts with LRRC32; decreases TGFB1 production in regulatory T cells. Interacts with BECN1; competes with EGFR for LAPTM4B binding; regulates EGFR activity. Interacts with EGFR; positively correlates with EGFR activation. Post-translationally, undergoes proteolytic cleavage following delivery to the lysosomes. Ubiquitinated by NEDD4.

Its subcellular location is the endomembrane system. The protein resides in the late endosome membrane. The protein localises to the cell membrane. It localises to the cell projection. It is found in the lysosome membrane. Its subcellular location is the endosome membrane. The protein resides in the endosome. The protein localises to the multivesicular body membrane. It localises to the multivesicular body lumen. Its function is as follows. Required for optimal lysosomal function. Blocks EGF-stimulated EGFR intraluminal sorting and degradation. Conversely by binding with the phosphatidylinositol 4,5-bisphosphate, regulates its PIP5K1C interaction, inhibits HGS ubiquitination and relieves LAPTM4B inhibition of EGFR degradation. Recruits SLC3A2 and SLC7A5 (the Leu transporter) to the lysosome, promoting entry of leucine and other essential amino acid (EAA) into the lysosome, stimulating activation of proton-transporting vacuolar (V)-ATPase protein pump (V-ATPase) and hence mTORC1 activation. Plays a role as negative regulator of TGFB1 production in regulatory T cells. Binds ceramide and facilitates its exit from late endosome in order to control cell death pathways. The protein is Lysosomal-associated transmembrane protein 4B of Rattus norvegicus (Rat).